The chain runs to 202 residues: Proteasome subunit beta 1 (202 aa).

Position 1 (Met-1) is a propeptide, removed in mature form; by autocatalysis. Residue Thr-2 is the Nucleophile of the active site.

It belongs to the peptidase T1B family. In terms of assembly, the 20S proteasome core is composed of 14 alpha and 14 beta subunits that assemble into four stacked heptameric rings, resulting in a barrel-shaped structure. The two inner rings, each composed of seven catalytic beta subunits, are sandwiched by two outer rings, each composed of seven alpha subunits. The catalytic chamber with the active sites is on the inside of the barrel. Has a gated structure, the ends of the cylinder being occluded by the N-termini of the alpha-subunits. Is capped at one or both ends by the proteasome regulatory ATPase, PAN.

It is found in the cytoplasm. The catalysed reaction is Cleavage of peptide bonds with very broad specificity.. The formation of the proteasomal ATPase PAN-20S proteasome complex, via the docking of the C-termini of PAN into the intersubunit pockets in the alpha-rings, triggers opening of the gate for substrate entry. Interconversion between the open-gate and close-gate conformations leads to a dynamic regulation of the 20S proteasome proteolysis activity. Functionally, component of the proteasome core, a large protease complex with broad specificity involved in protein degradation. In Pyrobaculum aerophilum (strain ATCC 51768 / DSM 7523 / JCM 9630 / CIP 104966 / NBRC 100827 / IM2), this protein is Proteasome subunit beta 1.